The following is a 119-amino-acid chain: Large ribosomal subunit protein uL18 (119 aa).

This sequence belongs to the universal ribosomal protein uL18 family. Part of the 50S ribosomal subunit; part of the 5S rRNA/L5/L18/L25 subcomplex. Contacts the 5S and 23S rRNAs.

This is one of the proteins that bind and probably mediate the attachment of the 5S RNA into the large ribosomal subunit, where it forms part of the central protuberance. This Chelativorans sp. (strain BNC1) protein is Large ribosomal subunit protein uL18.